A 403-amino-acid chain; its full sequence is Signal-transducing adaptor protein 2 (403 aa).

Positions 18-130 constitute a PH domain; it reads PSHYYESFLE…VPTDLTLLPG (113 aa). The residue at position 22 (Tyr-22) is a Phosphotyrosine; by SRC. The SH2 domain occupies 133–248; the sequence is YMMSEVLAKE…KALVPFLLDE (116 aa). Residue Tyr-250 is modified to Phosphotyrosine; by PTK6. The interval 270–308 is disordered; it reads APSAPGPGPAPCTGGPKPLSPASSQDKLPPLPPLPNQEE. Position 310 is a phosphotyrosine (Tyr-310). Tyr-322 carries the post-translational modification Phosphotyrosine; by SRC. Positions 331 to 374 are disordered; it reads SWPVILKPKKLPKPPAKLPKPPVGPKPEPKVFNGGLGRKLPVSS. Residues 343 to 356 show a composition bias toward pro residues; it reads KPPAKLPKPPVGPK. Positions 382 to 402 form a coiled coil; the sequence is AGLADMTAELQKKLEKRRALE.

In terms of assembly, interacts with PTK6 and CSF1R. Phosphorylated on tyrosine. Tyr-250 may be important for interaction with kinases. Phosphorylated by PTK6 at Tyr-250 modulates PTK6-mediated STAT3 activation. Tyr-22 and Tyr-322 appears to be phosphorylated by SRC. In terms of tissue distribution, widely expressed.

It is found in the cytoplasm. Functionally, substrate of protein kinase PTK6. May play a regulatory role in the acute-phase response in systemic inflammation and may modulate STAT3 activity. In Homo sapiens (Human), this protein is Signal-transducing adaptor protein 2 (STAP2).